Consider the following 988-residue polypeptide: Kinesin-like protein CIN8 (988 aa).

The Kinesin motor domain occupies 33-470 (NILVAVRCRG…LEYASKAKNI (438 aa)). An ATP-binding site is contributed by 125–132 (GMTSTGKT). The tract at residues 206-301 (FDSNVNGTSA…NSNNTNQQQS (96 aa)) is disordered. Residues 208-237 (SNVNGTSASGSSSRSSSRNNSPRSAPDNSR) show a composition bias toward low complexity. Residues 248–280 (HNTTGNSKISNNNHNKFSRFKQTSQESTRAHAS) show a composition bias toward polar residues. The segment covering 281-301 (NNHQNVHIPNNNSNNTNQQQS) has biased composition (low complexity). Coiled coils occupy residues 514-619 (EHYK…ELQQ) and 707-769 (KLAE…MQNF). Positions 965-974 (ALQEKRKPED) are enriched in basic and acidic residues. The tract at residues 965–988 (ALQEKRKPEDEVLLQAKLQRRNPD) is disordered.

It belongs to the TRAFAC class myosin-kinesin ATPase superfamily. Kinesin family. BimC subfamily.

It localises to the cytoplasm. It is found in the cytoskeleton. The protein resides in the spindle. Its function is as follows. Elongates the mitotic spindle by interacting with spindle microtubules to generate an outward force pushing spindle poles apart. Following spindle assembly, CIN8 and KIP1 apparently act to oppose a force, possibly generated by KAR3, that draws separated poles back together. In Candida glabrata (strain ATCC 2001 / BCRC 20586 / JCM 3761 / NBRC 0622 / NRRL Y-65 / CBS 138) (Yeast), this protein is Kinesin-like protein CIN8 (CIN8).